A 147-amino-acid polypeptide reads, in one-letter code: uncharacterized protein (147 aa).

In terms of domain architecture, Rhodanese spans 52-145 (YDRCLLIIDA…WLSNNYPTVC (94 aa)).

This is an uncharacterized protein from Buchnera aphidicola subsp. Baizongia pistaciae (strain Bp).